The following is a 1449-amino-acid chain: Gag-Pol polyprotein (1449 aa).

A lipid anchor (N-myristoyl glycine; by host) is attached at glycine 2. The interaction with Gp41 stretch occupies residues 7-31; that stretch reads VLTGGKLDQWEAIYLRPGGKKKYRL. An interaction with host CALM1 region spans residues 8-43; the sequence is LTGGKLDQWEAIYLRPGGKKKYRLKHLVWASRELER. The segment at 12 to 19 is interaction with host AP3D1; that stretch reads KLDQWEAI. The segment at 14–33 is interaction with membrane phosphatidylinositol 4,5-bisphosphate and RNA; sequence DQWEAIYLRPGGKKKYRLKH. The Nuclear export signal signature appears at 16 to 22; sequence WEAIYLR. Residues 26–32 carry the Nuclear localization signal motif; the sequence is KKKYRLK. An interaction with membrane phosphatidylinositol 4,5-bisphosphate region spans residues 73–77; it reads EGLRS. Residues 105–119 are compositionally biased toward basic and acidic residues; it reads KEKQEQHKSEPKKPE. The interval 105–128 is disordered; sequence KEKQEQHKSEPKKPEAGTAAAADS. A Phosphotyrosine; by host modification is found at tyrosine 134. The interaction with human PPIA/CYPA and NUP153 stretch occupies residues 191–229; sequence NTVGGHQAAMQMLKEVINEEAAEWDRTHPAPVGPLPPGQ. A dimerization/Multimerization of capsid protein p24 region spans residues 279-365; sequence YSPVSILEIK…GGPAHKARVL (87 aa). CCHC-type zinc fingers lie at residues 392–409 and 413–430; these read IKCF…NCKA and RGCW…DCKN. The disordered stretch occupies residues 445–492; sequence QRETRKLPPDNNKERAHSPATRELWVSGGEEHTGKGDAGEPGEDRDLS. Basic and acidic residues-rich tracts occupy residues 446-461 and 473-491; these read RETR…ERAH and GEEH…DRDL. Residues 499-503 are dimerization of protease; sequence PQITL. The Peptidase A2 domain occupies 518 to 587; it reads REALLDTGAD…TPVNIIGRNF (70 aa). The active-site For protease activity; shared with dimeric partner is the aspartate 523. Dimerization of protease stretches follow at residues 547 to 553 and 586 to 598; these read GIGGFIK and NFLT…LNFP. The 191-residue stretch at 641–831 folds into the Reverse transcriptase domain; that stretch reads EGKISRIGPE…PPFLWMGYEL (191 aa). The Mg(2+) site is built by aspartate 707, aspartate 782, and aspartate 783. The interval 824–832 is RT 'primer grip'; the sequence is FLWMGYELH. A Tryptophan repeat motif motif is present at residues 995–1011; the sequence is WETWWTEHWQATWIPEW. The region spanning 1031-1154 is the RNase H type-1 domain; it reads ISGAETYYVD…VDXLVSSGIR (124 aa). Residues aspartate 1040, glutamate 1075, aspartate 1095, and aspartate 1146 each coordinate Mg(2+). The segment at 1160–1201 adopts an Integrase-type zinc-finger fold; sequence DGIEKAQEEHERYHSNWKAMASDFNLPPIVAKEIVASCDKCQ. 4 residues coordinate Zn(2+): histidine 1169, histidine 1173, cysteine 1197, and cysteine 1200. Residues 1211–1361 form the Integrase catalytic domain; it reads INCSPGVWQL…TAGERIIDII (151 aa). Residues aspartate 1221, aspartate 1273, and glutamate 1309 each coordinate Mg(2+). A DNA-binding region (integrase-type) is located at residues 1380-1427; the sequence is FXVYYRDSRDPIWKGPAKLLWKGEGAVVIQDNGDIKVVPRRKAKIIRD.

Homotrimer; further assembles as hexamers of trimers. Interacts with gp41 (via C-terminus). Interacts with host CALM1; this interaction induces a conformational change in the Matrix protein, triggering exposure of the myristate group. Interacts with host AP3D1; this interaction allows the polyprotein trafficking to multivesicular bodies during virus assembly. Part of the pre-integration complex (PIC) which is composed of viral genome, matrix protein, Vpr and integrase. As to quaternary structure, homodimer; the homodimer further multimerizes as homohexamers or homopentamers. Interacts with human PPIA/CYPA; This interaction stabilizes the capsid. Interacts with human NUP153. Interacts with host PDZD8; this interaction stabilizes the capsid. Interacts with monkey TRIM5; this interaction destabilizes the capsid. In terms of assembly, homodimer, whose active site consists of two apposed aspartic acid residues. Heterodimer of p66 RT and p51 RT (RT p66/p51). Heterodimerization of RT is essential for DNA polymerase activity. The overall folding of the subdomains is similar in p66 RT and p51 RT but the spatial arrangements of the subdomains are dramatically different. As to quaternary structure, homotetramer; may further associate as a homohexadecamer. Part of the pre-integration complex (PIC) which is composed of viral genome, matrix protein, Vpr and integrase. Interacts with human SMARCB1/INI1 and human PSIP1/LEDGF isoform 1. Interacts with human KPNA3; this interaction might play a role in nuclear import of the pre-integration complex. Interacts with human NUP153; this interaction might play a role in nuclear import of the pre-integration complex. It depends on Mg(2+) as a cofactor. In terms of processing, specific enzymatic cleavages by the viral protease yield mature proteins. The protease is released by autocatalytic cleavage. The polyprotein is cleaved during and after budding, this process is termed maturation. Proteolytic cleavage of p66 RT removes the RNase H domain to yield the p51 RT subunit. Nucleocapsid protein p7 might be further cleaved after virus entry. Tyrosine phosphorylated presumably in the virion by a host kinase. Phosphorylation is apparently not a major regulator of membrane association. Post-translationally, phosphorylated possibly by host MAPK1; this phosphorylation is necessary for Pin1-mediated virion uncoating. In terms of processing, methylated by host PRMT6, impairing its function by reducing RNA annealing and the initiation of reverse transcription.

It localises to the host cell membrane. Its subcellular location is the host endosome. The protein localises to the host multivesicular body. It is found in the virion membrane. The protein resides in the host nucleus. It localises to the host cytoplasm. Its subcellular location is the virion. It catalyses the reaction Specific for a P1 residue that is hydrophobic, and P1' variable, but often Pro.. The catalysed reaction is Endohydrolysis of RNA in RNA/DNA hybrids. Three different cleavage modes: 1. sequence-specific internal cleavage of RNA. Human immunodeficiency virus type 1 and Moloney murine leukemia virus enzymes prefer to cleave the RNA strand one nucleotide away from the RNA-DNA junction. 2. RNA 5'-end directed cleavage 13-19 nucleotides from the RNA end. 3. DNA 3'-end directed cleavage 15-20 nucleotides away from the primer terminus.. It carries out the reaction 3'-end directed exonucleolytic cleavage of viral RNA-DNA hybrid.. The enzyme catalyses DNA(n) + a 2'-deoxyribonucleoside 5'-triphosphate = DNA(n+1) + diphosphate. With respect to regulation, protease: The viral protease is inhibited by many synthetic protease inhibitors (PIs), such as amprenavir, atazanavir, indinavir, loprinavir, nelfinavir, ritonavir and saquinavir. Use of protease inhibitors in tritherapy regimens permit more ambitious therapeutic strategies. Reverse transcriptase/ribonuclease H: RT can be inhibited either by nucleoside RT inhibitors (NRTIs) or by non nucleoside RT inhibitors (NNRTIs). NRTIs act as chain terminators, whereas NNRTIs inhibit DNA polymerization by binding a small hydrophobic pocket near the RT active site and inducing an allosteric change in this region. Classical NRTIs are abacavir, adefovir (PMEA), didanosine (ddI), lamivudine (3TC), stavudine (d4T), tenofovir (PMPA), zalcitabine (ddC), and zidovudine (AZT). Classical NNRTIs are atevirdine (BHAP U-87201E), delavirdine, efavirenz (DMP-266), emivirine (I-EBU), and nevirapine (BI-RG-587). The tritherapies used as a basic effective treatment of AIDS associate two NRTIs and one NNRTI. Its function is as follows. Mediates, with Gag polyprotein, the essential events in virion assembly, including binding the plasma membrane, making the protein-protein interactions necessary to create spherical particles, recruiting the viral Env proteins, and packaging the genomic RNA via direct interactions with the RNA packaging sequence (Psi). Gag-Pol polyprotein may regulate its own translation, by the binding genomic RNA in the 5'-UTR. At low concentration, the polyprotein would promote translation, whereas at high concentration, the polyprotein would encapsidate genomic RNA and then shut off translation. Functionally, targets the polyprotein to the plasma membrane via a multipartite membrane-binding signal, that includes its myristoylated N-terminus. Matrix protein is part of the pre-integration complex. Implicated in the release from host cell mediated by Vpu. Binds to RNA. In terms of biological role, forms the conical core that encapsulates the genomic RNA-nucleocapsid complex in the virion. Most core are conical, with only 7% tubular. The core is constituted by capsid protein hexamer subunits. The core is disassembled soon after virion entry. Host restriction factors such as TRIM5-alpha or TRIMCyp bind retroviral capsids and cause premature capsid disassembly, leading to blocks in reverse transcription. Capsid restriction by TRIM5 is one of the factors which restricts HIV-1 to the human species. Host PIN1 apparently facilitates the virion uncoating. On the other hand, interactions with PDZD8 or CYPA stabilize the capsid. Encapsulates and protects viral dimeric unspliced genomic RNA (gRNA). Binds these RNAs through its zinc fingers. Acts as a nucleic acid chaperone which is involved in rearangement of nucleic acid secondary structure during gRNA retrotranscription. Also facilitates template switch leading to recombination. As part of the polyprotein, participates in gRNA dimerization, packaging, tRNA incorporation and virion assembly. Its function is as follows. Aspartyl protease that mediates proteolytic cleavages of Gag and Gag-Pol polyproteins during or shortly after the release of the virion from the plasma membrane. Cleavages take place as an ordered, step-wise cascade to yield mature proteins. This process is called maturation. Displays maximal activity during the budding process just prior to particle release from the cell. Also cleaves Nef and Vif, probably concomitantly with viral structural proteins on maturation of virus particles. Hydrolyzes host EIF4GI and PABP1 in order to shut off the capped cellular mRNA translation. The resulting inhibition of cellular protein synthesis serves to ensure maximal viral gene expression and to evade host immune response. Also mediates cleavage of host YTHDF3. Mediates cleavage of host CARD8, thereby activating the CARD8 inflammasome, leading to the clearance of latent HIV-1 in patient CD4(+) T-cells after viral reactivation; in contrast, HIV-1 can evade CARD8-sensing when its protease remains inactive in infected cells prior to viral budding. Functionally, multifunctional enzyme that converts the viral RNA genome into dsDNA in the cytoplasm, shortly after virus entry into the cell. This enzyme displays a DNA polymerase activity that can copy either DNA or RNA templates, and a ribonuclease H (RNase H) activity that cleaves the RNA strand of RNA-DNA heteroduplexes in a partially processive 3' to 5' endonucleasic mode. Conversion of viral genomic RNA into dsDNA requires many steps. A tRNA(3)-Lys binds to the primer-binding site (PBS) situated at the 5'-end of the viral RNA. RT uses the 3' end of the tRNA primer to perform a short round of RNA-dependent minus-strand DNA synthesis. The reading proceeds through the U5 region and ends after the repeated (R) region which is present at both ends of viral RNA. The portion of the RNA-DNA heteroduplex is digested by the RNase H, resulting in a ssDNA product attached to the tRNA primer. This ssDNA/tRNA hybridizes with the identical R region situated at the 3' end of viral RNA. This template exchange, known as minus-strand DNA strong stop transfer, can be either intra- or intermolecular. RT uses the 3' end of this newly synthesized short ssDNA to perform the RNA-dependent minus-strand DNA synthesis of the whole template. RNase H digests the RNA template except for two polypurine tracts (PPTs) situated at the 5'-end and near the center of the genome. It is not clear if both polymerase and RNase H activities are simultaneous. RNase H probably can proceed both in a polymerase-dependent (RNA cut into small fragments by the same RT performing DNA synthesis) and a polymerase-independent mode (cleavage of remaining RNA fragments by free RTs). Secondly, RT performs DNA-directed plus-strand DNA synthesis using the PPTs that have not been removed by RNase H as primers. PPTs and tRNA primers are then removed by RNase H. The 3' and 5' ssDNA PBS regions hybridize to form a circular dsDNA intermediate. Strand displacement synthesis by RT to the PBS and PPT ends produces a blunt ended, linear dsDNA copy of the viral genome that includes long terminal repeats (LTRs) at both ends. In terms of biological role, catalyzes viral DNA integration into the host chromosome, by performing a series of DNA cutting and joining reactions. This enzyme activity takes place after virion entry into a cell and reverse transcription of the RNA genome in dsDNA. The first step in the integration process is 3' processing. This step requires a complex comprising the viral genome, matrix protein, Vpr and integrase. This complex is called the pre-integration complex (PIC). The integrase protein removes 2 nucleotides from each 3' end of the viral DNA, leaving recessed CA OH's at the 3' ends. In the second step, the PIC enters cell nucleus. This process is mediated through integrase and Vpr proteins, and allows the virus to infect a non dividing cell. This ability to enter the nucleus is specific of lentiviruses, other retroviruses cannot and rely on cell division to access cell chromosomes. In the third step, termed strand transfer, the integrase protein joins the previously processed 3' ends to the 5' ends of strands of target cellular DNA at the site of integration. The 5'-ends are produced by integrase-catalyzed staggered cuts, 5 bp apart. A Y-shaped, gapped, recombination intermediate results, with the 5'-ends of the viral DNA strands and the 3' ends of target DNA strands remaining unjoined, flanking a gap of 5 bp. The last step is viral DNA integration into host chromosome. This involves host DNA repair synthesis in which the 5 bp gaps between the unjoined strands are filled in and then ligated. Since this process occurs at both cuts flanking the HIV genome, a 5 bp duplication of host DNA is produced at the ends of HIV-1 integration. Alternatively, Integrase may catalyze the excision of viral DNA just after strand transfer, this is termed disintegration. The sequence is that of Gag-Pol polyprotein (gag-pol) from Human immunodeficiency virus type 1 group N (isolate YBF106) (HIV-1).